The following is a 256-amino-acid chain: Large ribosomal subunit protein eL8y (256 aa).

Basic residues predominate over residues 1 to 15 (MAPKKGVKVASKKKP). Residues 1–20 (MAPKKGVKVASKKKPEKVTN) form a disordered region.

It belongs to the eukaryotic ribosomal protein eL8 family.

The sequence is that of Large ribosomal subunit protein eL8y (RPL7AB) from Arabidopsis thaliana (Mouse-ear cress).